A 335-amino-acid chain; its full sequence is Protein BIG1 (335 aa).

The N-terminal stretch at 1–17 is a signal peptide; it reads MQTVLKYLLLIMCGSFC. Residues 20-275 are Lumenal-facing; sequence EELQNQTNVP…FDSQLIENNR (256 aa). N-linked (GlcNAc...) asparagine glycans are attached at residues N24 and N144. A helical transmembrane segment spans residues 276–296; the sequence is GLLQLIFTILVGYILIQFFFT. Residues 297–335 lie on the Cytoplasmic side of the membrane; the sequence is KKTIVDEKITNKKDNVKQTSPQLLKKVQEIQKKPSQQVS.

It belongs to the BIG1 family. Post-translationally, N-glycosylated.

It localises to the endoplasmic reticulum membrane. Its function is as follows. Required for normal beta-1,6-glucan synthesis. The polypeptide is Protein BIG1 (BIG1) (Saccharomyces cerevisiae (strain ATCC 204508 / S288c) (Baker's yeast)).